Consider the following 403-residue polypeptide: Ribosomal RNA large subunit methyltransferase I (403 aa).

Residues Tyr-9–Arg-88 enclose the PUA domain.

This sequence belongs to the methyltransferase superfamily. RlmI family.

Its subcellular location is the cytoplasm. The enzyme catalyses cytidine(1962) in 23S rRNA + S-adenosyl-L-methionine = 5-methylcytidine(1962) in 23S rRNA + S-adenosyl-L-homocysteine + H(+). In terms of biological role, specifically methylates the cytosine at position 1962 (m5C1962) of 23S rRNA. The polypeptide is Ribosomal RNA large subunit methyltransferase I (Salmonella agona (strain SL483)).